The following is a 316-amino-acid chain: Probable cell division protein WhiA (316 aa).

The segment at residues 275-309 (TLKELGEMVSGGKISKSGINHRLRKIDDIAEKLRA) is a DNA-binding region (H-T-H motif).

Belongs to the WhiA family.

In terms of biological role, involved in cell division and chromosome segregation. This chain is Probable cell division protein WhiA, found in Bacillus anthracis (strain CDC 684 / NRRL 3495).